We begin with the raw amino-acid sequence, 243 residues long: ADP-ribosylation factor-like protein 10 (243 aa).

GTP contacts are provided by residues 83–90 (GLDGSGKS), 127–131 (EIGGS), and 184–187 (NKQD).

It belongs to the small GTPase superfamily. Arf family.

This is ADP-ribosylation factor-like protein 10 (Arl10) from Mus musculus (Mouse).